Consider the following 430-residue polypeptide: MANVVVVGAQWGDEGKGKIVDWLSERADVIARFQGGHNAGHTLVIDGKVYKLSLLPSGIVRPGKLSVIGNGVVLDPWHLVQEIAKLRADGVEISPESLMIAENAVLILPLHGELDRARESQNSVAKIGTTGRGIGPAYEDKVGRRAIRVADLADEATLALRVDRLMVHHDALRRGLGIEPVDREALLTQLREIAPQVLPYAKPVWKVMNEMRKAGKRILFEGAQGALLDIDFGTYPYVTSSNVIAGQAATGTGIGPGAIGFVLGIVKAYTTRVGEGPFPAELQDADGERLGERGREFGTVTGRKRRCGWFDAVLVRQTCATSGVSGIALTKLDVLDGFETLKICVGYELDGERLDHLPIAADQQARCTPIFEELEGWSESTAGARSWADLPGAAVKYVRRIEELIQCPVALLSTSPERDDTILVTDPFED.

GTP is bound by residues 12 to 18 (GDEGKGK) and 40 to 42 (GHT). The active-site Proton acceptor is the Asp13. Mg(2+)-binding residues include Asp13 and Gly40. IMP is bound by residues 13–16 (DEGK), 38–41 (NAGH), Thr130, Arg144, Gln224, Thr239, and Arg303. Residue His41 is the Proton donor of the active site. 299–305 (TVTGRKR) contacts substrate. GTP contacts are provided by residues Arg305, 331 to 333 (KLD), and 413 to 415 (STS).

Belongs to the adenylosuccinate synthetase family. As to quaternary structure, homodimer. The cofactor is Mg(2+).

It localises to the cytoplasm. It catalyses the reaction IMP + L-aspartate + GTP = N(6)-(1,2-dicarboxyethyl)-AMP + GDP + phosphate + 2 H(+). It functions in the pathway purine metabolism; AMP biosynthesis via de novo pathway; AMP from IMP: step 1/2. Functionally, plays an important role in the de novo pathway of purine nucleotide biosynthesis. Catalyzes the first committed step in the biosynthesis of AMP from IMP. In Cereibacter sphaeroides (strain ATCC 17029 / ATH 2.4.9) (Rhodobacter sphaeroides), this protein is Adenylosuccinate synthetase.